An 80-amino-acid chain; its full sequence is MSDDTFSRIQSIVEEQLGVESSKIKLETDFQKDLGADSLDVVELIMAFEEEFDINVNDDAAGDIKTVQQVLEYIEAESAK.

The Carrier domain occupies 3–78; the sequence is DDTFSRIQSI…QVLEYIEAES (76 aa). At serine 38 the chain carries O-(pantetheine 4'-phosphoryl)serine.

It belongs to the acyl carrier protein (ACP) family. 4'-phosphopantetheine is transferred from CoA to a specific serine of apo-ACP by AcpS. This modification is essential for activity because fatty acids are bound in thioester linkage to the sulfhydryl of the prosthetic group.

The protein resides in the plastid. It localises to the chloroplast. The protein operates within lipid metabolism; fatty acid biosynthesis. Its function is as follows. Carrier of the growing fatty acid chain in fatty acid biosynthesis. This chain is Acyl carrier protein, found in Trieres chinensis (Marine centric diatom).